We begin with the raw amino-acid sequence, 85 residues long: Beta-insect depressant toxin Lqh-dprIT3a (85 aa).

The signal sequence occupies residues 1–21; sequence MKLLLLLTISASMLIEGLVNA. Residues 22–82 form the LCN-type CS-alpha/beta domain; the sequence is DGYIRGGDGC…EWDYETNTCG (61 aa). Disulfide bonds link cysteine 31–cysteine 81, cysteine 35–cysteine 56, cysteine 42–cysteine 63, and cysteine 46–cysteine 65. The residue at position 82 (glycine 82) is a Glycine amide.

Belongs to the long (4 C-C) scorpion toxin superfamily. Sodium channel inhibitor family. Beta subfamily. As to expression, expressed by the venom gland.

The protein localises to the secreted. Functionally, depressant insect beta-toxins cause a transient contraction paralysis followed by a slow flaccid paralysis. They bind voltage-independently at site-4 of sodium channels (Nav) and block action potentials, primarily by depolarizing the axonal membrane and suppressing the sodium current. This depressant toxin is active only on insects. It is found in a relatively small amount in the venom, and its activity on insects is 10-fold higher compared to other known depressant toxins. This chain is Beta-insect depressant toxin Lqh-dprIT3a, found in Leiurus hebraeus (Hebrew deathstalker scorpion).